We begin with the raw amino-acid sequence, 842 residues long: MSRPLSDQDKRKQISVRGLAGVENVSDLKKNFNRHLHFTLVKDRNVATPRDYYFALAHTVRDHLVDRWIRTQQHYYAKDPKRIYYLSLELYMGRTLQNTMVNLALENACDEATYQLGLDMEELEEIEEDAGLGNGGLGRLAACFLDSMATLGLAAYGYGIRYEFGIFNQKICGGWQMEEADDWLRYGNPWEKARPEFTLPVHFYGRVEHTSQGAKWVDTQVVLAMPYDTPVPGYRNNVVNTMRLWSAKAPPYFNLKDFNVGGYIQAVLDRNLAENISRVLYPNDKFFEGKELRLKQEYFVVAATLQDIIRRFKSSKFGCRDPVRTNFDAFPDKVAIQLNDTHPSLAIPELIRILVDLERLDWDKAWDVTVKTCAYTNHTVLPEALERWPVHLMETLLPRHLQIIYEINQRFLNRVAAAFPGDVDRLRRMSLVEEGAVKRINMAHLCIAGSHAVNGVARIHSEILKKTIFKDFYELEPHKFQNKTNGITPRRWLVLCNPGLAEVIAERIGEEYISDLDQLRKLLSYLDDQAFIRDVAKVKQENKLKFSAYLETEYKVHINPNSLFDVQVKRIHEYKRQLLNCLHIITLYNRIKREPNRFMVPRTIMIGGKAAPGYHMAKMIIKLITAIGDVVNHDPAVGDRFRVIFLENYRVSLAEKVIPAADLSEQISTAGTEASGTGNMKFMLNGALTIGTMDGANVEMAEEAGEDNFFIFGMRVEDVERLDQRGYNAQEYYDRIPELRQIIEQLSSGFFSPKQPDLFKDIVNMVMHHDRFKVFADYEEYIKCQDKVSELYKNPREWTRMVIRNIATSGKFSSDRTIAQYAREIWGLEPSRQRLPAPDEKI.

An N-acetylserine modification is found at Ser-2. Residue Ser-15 is modified to Phosphoserine; by PHK; in form phosphorylase A. Ser-26 carries the post-translational modification Phosphoserine. AMP-binding residues include Asp-43 and Tyr-76. Phosphotyrosine occurs at positions 204 and 227. Residue 310 to 319 (RRFKSSKFGC) participates in AMP binding. Position 430 is a phosphoserine (Ser-430). Position 473 is a phosphotyrosine (Tyr-473). Residue Ser-514 is modified to Phosphoserine. N6-(pyridoxal phosphate)lysine is present on Lys-681. 2 positions are modified to phosphoserine: Ser-747 and Ser-748.

Belongs to the glycogen phosphorylase family. As to quaternary structure, homodimer. Homotetramer; to form the enzymatically active phosphorylase A. Pyridoxal 5'-phosphate serves as cofactor. In terms of processing, phosphorylation of Ser-15 converts phosphorylase B (unphosphorylated) to phosphorylase A.

It catalyses the reaction [(1-&gt;4)-alpha-D-glucosyl](n) + phosphate = [(1-&gt;4)-alpha-D-glucosyl](n-1) + alpha-D-glucose 1-phosphate. With respect to regulation, allosterically regulated through the non-covalent binding of metabolites, being activated by AMP and inhibited by ATP, ADP, and glucose-6-phosphate. The activity is also controlled by post-translational modifications including phosphorylation. Allosteric enzyme that catalyzes the rate-limiting step in glycogen catabolism, the phosphorolytic cleavage of glycogen to produce glucose-1-phosphate, and plays a central role in maintaining cellular and organismal glucose homeostasis. The sequence is that of Glycogen phosphorylase, muscle form from Rattus norvegicus (Rat).